A 1488-amino-acid polypeptide reads, in one-letter code: Chromosome partition protein MukB (1488 aa).

34-41 serves as a coordination point for ATP; it reads GGNGAGKS. 3 coiled-coil regions span residues 326–418, 444–472, and 509–602; these read LEAD…QYNQ, LDTFQAKEQEATEKLLSLEQKMSVAQTAH, and RHLA…QRAP. Positions 666–783 are flexible hinge; that stretch reads PGGAEDQRLN…SLPIFGRAAR (118 aa). Coiled coils occupy residues 835–923, 977–1116, and 1209–1265; these read EAEI…AKLE, EMLS…AKAG, and VEAI…LQSV. The tract at residues 1049-1074 is disordered; that stretch reads ADSGAEERARQRRDELHAQLSNNRSR. Basic and acidic residues predominate over residues 1051–1065; it reads SGAEERARQRRDELH.

Belongs to the SMC family. MukB subfamily. In terms of assembly, homodimerization via its hinge domain. Binds to DNA via its C-terminal region. Interacts, and probably forms a ternary complex, with MukE and MukF via its C-terminal region. The complex formation is stimulated by calcium or magnesium. Interacts with tubulin-related protein FtsZ.

It localises to the cytoplasm. It is found in the nucleoid. Plays a central role in chromosome condensation, segregation and cell cycle progression. Functions as a homodimer, which is essential for chromosome partition. Involved in negative DNA supercoiling in vivo, and by this means organize and compact chromosomes. May achieve or facilitate chromosome segregation by condensation DNA from both sides of a centrally located replisome during cell division. This is Chromosome partition protein MukB from Salmonella gallinarum (strain 287/91 / NCTC 13346).